An 83-amino-acid polypeptide reads, in one-letter code: Sec-independent protein translocase protein TatA (83 aa).

Residues 1–21 (MGSFSIWHWLIVLLIVVMVFG) form a helical membrane-spanning segment. A disordered region spans residues 44–83 (KDGGQSAAATDDKPAAPAGQVTNAQASDKTTIDVEARQKS). Residues 63-72 (QVTNAQASDK) are compositionally biased toward polar residues. Basic and acidic residues predominate over residues 73-83 (TTIDVEARQKS).

It belongs to the TatA/E family. The Tat system comprises two distinct complexes: a TatABC complex, containing multiple copies of TatA, TatB and TatC subunits, and a separate TatA complex, containing only TatA subunits. Substrates initially bind to the TatABC complex, which probably triggers association of the separate TatA complex to form the active translocon.

It localises to the cell inner membrane. Functionally, part of the twin-arginine translocation (Tat) system that transports large folded proteins containing a characteristic twin-arginine motif in their signal peptide across membranes. TatA could form the protein-conducting channel of the Tat system. The polypeptide is Sec-independent protein translocase protein TatA (Polaromonas sp. (strain JS666 / ATCC BAA-500)).